The following is a 353-amino-acid chain: Ribosomal RNA small subunit methyltransferase H (353 aa).

S-adenosyl-L-methionine-binding positions include 49–51, D68, F95, D126, and Q133; that span reads GGH.

It belongs to the methyltransferase superfamily. RsmH family.

The protein localises to the cytoplasm. The enzyme catalyses cytidine(1402) in 16S rRNA + S-adenosyl-L-methionine = N(4)-methylcytidine(1402) in 16S rRNA + S-adenosyl-L-homocysteine + H(+). Functionally, specifically methylates the N4 position of cytidine in position 1402 (C1402) of 16S rRNA. The sequence is that of Ribosomal RNA small subunit methyltransferase H from Corynebacterium urealyticum (strain ATCC 43042 / DSM 7109).